Reading from the N-terminus, the 387-residue chain is 8-amino-7-oxononanoate synthase (387 aa).

Residue arginine 19 coordinates substrate. 106–107 (GY) contacts pyridoxal 5'-phosphate. Histidine 131 contacts substrate. Residues serine 177, histidine 205, and threonine 236 each coordinate pyridoxal 5'-phosphate. Lysine 239 carries the post-translational modification N6-(pyridoxal phosphate)lysine. Threonine 353 contributes to the substrate binding site.

The protein belongs to the class-II pyridoxal-phosphate-dependent aminotransferase family. BioF subfamily. As to quaternary structure, homodimer. Requires pyridoxal 5'-phosphate as cofactor.

The enzyme catalyses 6-carboxyhexanoyl-[ACP] + L-alanine + H(+) = (8S)-8-amino-7-oxononanoate + holo-[ACP] + CO2. Its pathway is cofactor biosynthesis; biotin biosynthesis. Its function is as follows. Catalyzes the decarboxylative condensation of pimeloyl-[acyl-carrier protein] and L-alanine to produce 8-amino-7-oxononanoate (AON), [acyl-carrier protein], and carbon dioxide. The sequence is that of 8-amino-7-oxononanoate synthase from Nitrosomonas eutropha (strain DSM 101675 / C91 / Nm57).